Consider the following 64-residue polypeptide: Large ribosomal subunit protein bL35 (64 aa).

It belongs to the bacterial ribosomal protein bL35 family.

The sequence is that of Large ribosomal subunit protein bL35 from Carboxydothermus hydrogenoformans (strain ATCC BAA-161 / DSM 6008 / Z-2901).